The chain runs to 252 residues: GPI alpha-1,4-mannosyltransferase I, stabilizing subunit (252 aa).

Positions 1 to 22 (MAASALAWLLLWAAGLVGRLAA) are cleaved as a signal peptide. Asn-97 and Asn-209 each carry an N-linked (GlcNAc...) asparagine glycan. Residues 225–245 (VCSVTLLITVLCSTLILLAVF) traverse the membrane as a helical segment.

The protein belongs to the PIGX family. As to quaternary structure, part of the glycosylphosphatidylinositol-mannosyltransferase I complex that is composed of PIGM and PIGX. Interacts with PIGM; PIGX stabilizes PIGM.

The protein resides in the endoplasmic reticulum membrane. It functions in the pathway glycolipid biosynthesis; glycosylphosphatidylinositol-anchor biosynthesis. In terms of biological role, stabilizing subunit of the glycosylphosphatidylinositol-mannosyltransferase I complex which catalyzes the transfer of the first mannose, via an alpha-1,4 bond from a dolichol-phosphate-mannose (Dol-P-Man) to the glucosaminyl acyl phosphatidylinositol (GlcN-(acyl)PI) intermediate to generate alpha-D-Man-(1-&gt;4)-alpha-D-GlcN-(1-&gt;6)-(1-radyl,2-acyl-sn-glycero-3-phospho)-2-acyl-inositol and participates in the sixth step of the glycosylphosphatidylinositol-anchor biosynthesis. Probably acts by stabilizing the mannosyltransferase PIGM. In Rattus norvegicus (Rat), this protein is GPI alpha-1,4-mannosyltransferase I, stabilizing subunit.